The primary structure comprises 668 residues: Ras guanine nucleotide exchange factor D (668 aa).

In terms of domain architecture, Rho-GAP spans 27 to 224; sequence KKLESIFGIA…LMVMDIDEFD (198 aa). In terms of domain architecture, N-terminal Ras-GEF spans 237–362; the sequence is GESIVKAATF…YFQTFFKPVI (126 aa). The Ras-GEF domain occupies 433 to 663; that stretch reads GSNIIAQQIT…HSISHKLEPR (231 aa).

In terms of biological role, promotes the exchange of Ras-bound GDP by GTP. The sequence is that of Ras guanine nucleotide exchange factor D (gefD) from Dictyostelium discoideum (Social amoeba).